The chain runs to 243 residues: Probable transcriptional regulatory protein BPP2422 (243 aa).

The tract at residues 1–21 is disordered; sequence MAGHSKWANIQHRKGRQDAKR.

Belongs to the TACO1 family.

The protein resides in the cytoplasm. The chain is Probable transcriptional regulatory protein BPP2422 from Bordetella parapertussis (strain 12822 / ATCC BAA-587 / NCTC 13253).